The chain runs to 100 residues: Large ribosomal subunit protein uL23 (100 aa).

It belongs to the universal ribosomal protein uL23 family. As to quaternary structure, part of the 50S ribosomal subunit. Contacts protein L29, and trigger factor when it is bound to the ribosome.

Functionally, one of the early assembly proteins it binds 23S rRNA. One of the proteins that surrounds the polypeptide exit tunnel on the outside of the ribosome. Forms the main docking site for trigger factor binding to the ribosome. This is Large ribosomal subunit protein uL23 from Synechococcus sp. (strain CC9311).